Here is an 802-residue protein sequence, read N- to C-terminus: Ras GTPase-activating protein 4 (802 aa).

C2 domains are found at residues 1-105 (MAKR…SGWT) and 116-232 (VQGE…EGWF). Ca(2+)-binding residues include Asp21, Asp27, Asp74, Asp76, Ser79, Asp82, Asp149, Asp155, Asp202, Asp204, Ser207, and Asp210. The region spanning 317–545 (GLAKDFLDLL…AQLKDFIMKL (229 aa)) is the Ras-GAP domain. Residues 565–672 (PPVKEGPLFI…WLSALRKAST (108 aa)) enclose the PH domain. The segment at 674 to 710 (NRGLLRSYHPGIFRGDKWSCCHQKDKTDQGCDKTHSR) adopts a Btk-type zinc-finger fold. 4 residues coordinate Zn(2+): His682, Cys693, Cys694, and Cys704.

Ca(2+) is required as a cofactor. Isoform 2 is expressed in osteoblasts.

The protein localises to the cytoplasm. It localises to the cytosol. It is found in the cell membrane. In terms of biological role, ca(2+)-dependent Ras GTPase-activating protein, that switches off the Ras-MAPK pathway following a stimulus that elevates intracellular calcium. Functions as an adaptor for Cdc42 and Rac1 during FcR-mediated phagocytosis. Isoform 2 activates the Ras pathway and promotes RANKL shedding by modulating the expression of MMP14. This is Ras GTPase-activating protein 4 (Rasa4) from Mus musculus (Mouse).